The sequence spans 563 residues: 4-hydroxy-7-methoxy-3-oxo-3,4-dihydro-2H-1,4-benzoxazin-2-yl glucoside beta-D-glucosidase 2, chloroplastic (563 aa).

A chloroplast-targeting transit peptide spans 1–51; it reads MAPLLAAAMNHAAHPVLRSHLGPNNESFSRHHLSSSPQSSKRRFNLSFTPR. A disordered region spans residues 17-43; it reads LRSHLGPNNESFSRHHLSSSPQSSKRR. Residues glutamine 89, histidine 193, and 241–242 contribute to the a beta-D-glucoside site; that span reads NE. Glutamate 242 (proton donor) is an active-site residue. A disulfide bridge links cysteine 261 with cysteine 267. A dimerization region spans residues 322–358; it reads SFLDEQAKERSMDINLGWFLEPVVRGDYPFSMRSLAR. An a beta-D-glucoside-binding site is contributed by tyrosine 384. Dimerization regions lie at residues 391-402 and 447-450; these read HIDISPKYSPVL and KYGN. Residues glutamate 457, tryptophan 508, 515 to 516, and tyrosine 524 each bind a beta-D-glucoside; that span reads EW. The active-site Nucleophile is the glutamate 457.

The protein belongs to the glycosyl hydrolase 1 family. As to quaternary structure, homo- and heterodimer. Expressed in leaves only starting at day 6 after germination.

The protein localises to the plastid. Its subcellular location is the chloroplast. It catalyses the reaction Hydrolysis of terminal, non-reducing beta-D-glucosyl residues with release of beta-D-glucose.. It carries out the reaction DIMBOA beta-D-glucoside + H2O = DIMBOA + D-glucose. The enzyme catalyses DIBOA beta-D-glucoside + H2O = DIBOA + D-glucose. In terms of biological role, beta-glucosidase acting poorly on artificial aryl beta-glucosides. Has no activity toward the chromogenic substrate 6-bromo-2-naphthyl-beta-D-glucoside (6BNGlc). The protein is 4-hydroxy-7-methoxy-3-oxo-3,4-dihydro-2H-1,4-benzoxazin-2-yl glucoside beta-D-glucosidase 2, chloroplastic (GLU2) of Zea mays (Maize).